The following is a 284-amino-acid chain: Tropomyosin isoforms a/b/d/f (284 aa).

Positions 1–284 (MDAIKKKMQA…DSTFQELSGY (284 aa)) form a coiled coil. Residues 40 to 78 (EEELRDTQKKMTQTGDDLDKAQEDLSAATSKLEEKEKTV) are disordered.

The protein belongs to the tropomyosin family. As to expression, isoform a and isoform d are expressed in body wall muscles, vulva, anus muscles and male tail muscles. Located to the myofibrils of thin actin filaments.

The protein resides in the cytoplasm. It localises to the myofibril. It is found in the sarcomere. Its subcellular location is the i band. Functionally, tropomyosin, in association with the troponin complex, plays a central role in the calcium dependent regulation of muscle contraction. Involved in muscle actin filament organization and muscle arm extension and morphology. Protects actin filaments from depolymerization by unc-60 in vitro. Also has a role in male mating behavior by regulating the copulatory spicules. Binds to F-actin. In Caenorhabditis elegans, this protein is Tropomyosin isoforms a/b/d/f (lev-11).